Reading from the N-terminus, the 586-residue chain is A-type ATP synthase subunit A (586 aa).

232–239 (GPFGSGKT) is a binding site for ATP.

Belongs to the ATPase alpha/beta chains family. As to quaternary structure, has multiple subunits with at least A(3), B(3), C, D, E, F, H, I and proteolipid K(x).

The protein localises to the cell membrane. It catalyses the reaction ATP + H2O + 4 H(+)(in) = ADP + phosphate + 5 H(+)(out). Functionally, component of the A-type ATP synthase that produces ATP from ADP in the presence of a proton gradient across the membrane. The A chain is the catalytic subunit. The polypeptide is A-type ATP synthase subunit A (Methanococcus maripaludis (strain C7 / ATCC BAA-1331)).